Consider the following 218-residue polypeptide: MTLVLASASPRRRALLAVLGIPFVVDPAAIDEPLPERHSHPERIARALARHKATVVAARRPGDWVLAADTVVVFRGRLLGKPESAEEAHAMLRLLRGRWHRVITAVALARGRRRWVDHTTTWVLMRQYSDEDITASIARGEPFDKAGGYAIQDPDLRPVESWRGCYCNVVGLSIWLTWRLLQQAGFPVSTPDERTLPPVCQQCPLAPAEVTSRTANRE.

Asp-69 serves as the catalytic Proton acceptor.

This sequence belongs to the Maf family. YhdE subfamily. A divalent metal cation serves as cofactor.

The protein localises to the cytoplasm. The enzyme catalyses dTTP + H2O = dTMP + diphosphate + H(+). It carries out the reaction UTP + H2O = UMP + diphosphate + H(+). Nucleoside triphosphate pyrophosphatase that hydrolyzes dTTP and UTP. May have a dual role in cell division arrest and in preventing the incorporation of modified nucleotides into cellular nucleic acids. The protein is dTTP/UTP pyrophosphatase of Thermomicrobium roseum (strain ATCC 27502 / DSM 5159 / P-2).